We begin with the raw amino-acid sequence, 276 residues long: Stathmin domain-containing protein 1 (276 aa).

Disordered stretches follow at residues 1-40, 61-106, and 226-250; these read MGCG…ENCS, VQMG…RERQ, and GFEP…ATLI. G2 is lipidated: N-myristoyl glycine. Composition is skewed to polar residues over residues 68–78 and 87–100; these read GTISENSPSPS and DLVT…PQSL. In terms of domain architecture, SLD spans 118 to 244; that stretch reads QGIIQSHSKV…GKPLKRKKSK (127 aa).

This is Stathmin domain-containing protein 1 (STMND1) from Homo sapiens (Human).